The primary structure comprises 213 residues: uncharacterized protein (213 aa).

This is an uncharacterized protein from Escherichia coli (strain K12).